Here is an 86-residue protein sequence, read N- to C-terminus: Cell division topological specificity factor (86 aa).

It belongs to the MinE family.

Its function is as follows. Prevents the cell division inhibition by proteins MinC and MinD at internal division sites while permitting inhibition at polar sites. This ensures cell division at the proper site by restricting the formation of a division septum at the midpoint of the long axis of the cell. The chain is Cell division topological specificity factor from Shewanella frigidimarina (strain NCIMB 400).